A 122-amino-acid polypeptide reads, in one-letter code: Cytochrome b-c1 complex subunit 7-1, mitochondrial (122 aa).

Belongs to the UQCRB/QCR7 family. In terms of assembly, component of the ubiquinol-cytochrome c oxidoreductase (cytochrome b-c1 complex, complex III, CIII), a multisubunit enzyme composed of 10 subunits. The complex is composed of 3 respiratory subunits cytochrome b (MT-CYB), cytochrome c1 (CYC1-1 or CYC1-2) and Rieske protein (UCR1-1 or UCR1-2), 2 core protein subunits MPPalpha1 (or MPPalpha2) and MPPB, and 5 low-molecular weight protein subunits QCR7-1 (or QCR7-2), UCRQ-1 (or UCRQ-2), QCR9, UCRY and probably QCR6-1 (or QCR6-2). The complex exists as an obligatory dimer and forms supercomplexes (SCs) in the inner mitochondrial membrane with NADH-ubiquinone oxidoreductase (complex I, CI), resulting in different assemblies (supercomplexes SCI(1)III(2) and SCI(2)III(4)).

The protein resides in the mitochondrion inner membrane. In terms of biological role, component of the ubiquinol-cytochrome c oxidoreductase, a multisubunit transmembrane complex that is part of the mitochondrial electron transport chain which drives oxidative phosphorylation. The respiratory chain contains 3 multisubunit complexes succinate dehydrogenase (complex II, CII), ubiquinol-cytochrome c oxidoreductase (cytochrome b-c1 complex, complex III, CIII) and cytochrome c oxidase (complex IV, CIV), that cooperate to transfer electrons derived from NADH and succinate to molecular oxygen, creating an electrochemical gradient over the inner membrane that drives transmembrane transport and the ATP synthase. The cytochrome b-c1 complex catalyzes electron transfer from ubiquinol to cytochrome c, linking this redox reaction to translocation of protons across the mitochondrial inner membrane, with protons being carried across the membrane as hydrogens on the quinol. In the process called Q cycle, 2 protons are consumed from the matrix, 4 protons are released into the intermembrane space and 2 electrons are passed to cytochrome c. This Arabidopsis thaliana (Mouse-ear cress) protein is Cytochrome b-c1 complex subunit 7-1, mitochondrial (QCR7-1).